A 172-amino-acid chain; its full sequence is Co-chaperone protein HscB homolog (172 aa).

The J domain maps to N2 to L74.

This sequence belongs to the HscB family. As to quaternary structure, interacts with HscA and stimulates its ATPase activity.

Functionally, co-chaperone involved in the maturation of iron-sulfur cluster-containing proteins. Seems to help targeting proteins to be folded toward HscA. This Aeromonas hydrophila subsp. hydrophila (strain ATCC 7966 / DSM 30187 / BCRC 13018 / CCUG 14551 / JCM 1027 / KCTC 2358 / NCIMB 9240 / NCTC 8049) protein is Co-chaperone protein HscB homolog.